The following is a 424-amino-acid chain: Glutamate-1-semialdehyde 2,1-aminomutase (424 aa).

K263 is subject to N6-(pyridoxal phosphate)lysine.

This sequence belongs to the class-III pyridoxal-phosphate-dependent aminotransferase family. HemL subfamily. In terms of assembly, homodimer. Pyridoxal 5'-phosphate is required as a cofactor.

The protein resides in the cytoplasm. It carries out the reaction (S)-4-amino-5-oxopentanoate = 5-aminolevulinate. Its pathway is porphyrin-containing compound metabolism; protoporphyrin-IX biosynthesis; 5-aminolevulinate from L-glutamyl-tRNA(Glu): step 2/2. This is Glutamate-1-semialdehyde 2,1-aminomutase from Campylobacter jejuni subsp. doylei (strain ATCC BAA-1458 / RM4099 / 269.97).